A 250-amino-acid polypeptide reads, in one-letter code: 5'-nucleotidase SurE (250 aa).

4 residues coordinate a divalent metal cation: D8, D9, S39, and N95.

This sequence belongs to the SurE nucleotidase family. Requires a divalent metal cation as cofactor.

The protein localises to the cytoplasm. The catalysed reaction is a ribonucleoside 5'-phosphate + H2O = a ribonucleoside + phosphate. Functionally, nucleotidase that shows phosphatase activity on nucleoside 5'-monophosphates. The sequence is that of 5'-nucleotidase SurE from Cupriavidus necator (strain ATCC 17699 / DSM 428 / KCTC 22496 / NCIMB 10442 / H16 / Stanier 337) (Ralstonia eutropha).